The following is a 450-amino-acid chain: MEQAPPDPERQLQPAPLEPLGSPDAGLGAAVGKEAEGAGEESSGVDTMTHNNFWLKKIEISVSEAEKRTGRNAMNMQETYTAYLIETRSVEHTDGQSVLTDSLWRRYSEFELLRSYLLVYYPHIVVPPLPEKRAEFVWHKLSADNMDPDFVERRRIGLENFLLRIASHPILCRDKIFYLFLTQEGNWKETVNETGFQLKADSRLKALNATFRVKNPDKRFTDLKHYSDELQSVISHLLRVRARVADRLYGVYKVHGNYGRVFSEWSAIEKEMGDGLQSAGHHMDVYASSIDDILEDEEHYADQLKEYLFYAEALRAVCRKHELMQYDLEMAAQDLASKKQQCEELVTGTVRTFSLKGMTTKLFGQETPEQREARIKVLEEQINEGEQQLKSKNLEGREFVKNAWADIERFKEQKNRDLKEALISYAVMQISMCKKGIQVWTNAKECFSKM.

An N-acetylmethionine modification is found at M1. A disordered region spans residues M1–D46. S22 bears the Phosphoserine mark. Residues S61 to W187 enclose the PX domain. The a 1,2-diacyl-sn-glycero-3-phospho-(1D-myo-inositol-3-phosphate) site is built by R106, S108, K132, and R154.

The protein belongs to the sorting nexin family. Heterodimer; heterodimerizes with SNX7 or SNX30. Interacts with WWC1/KIBRA. Identified in a complex with WWC1/KIBRA and dynein components DYNLL1 and DYNC1I2. Interacts with BIN1.

It is found in the early endosome membrane. Involved in the regulation of endocytosis and in several stages of intracellular trafficking. Plays a role in recycling endocytosed transferrin receptor and prevent its degradation. Involved in autophagosome assembly by regulating trafficking and recycling of phospholipid scramblase ATG9A. The sequence is that of Sorting nexin-4 from Homo sapiens (Human).